A 400-amino-acid chain; its full sequence is Imidazolonepropionase (400 aa).

Positions 68 and 70 each coordinate Fe(3+). Positions 68 and 70 each coordinate Zn(2+). 4-imidazolone-5-propanoate-binding residues include Arg-77, Tyr-140, and His-173. An N-formimidoyl-L-glutamate-binding site is contributed by Tyr-140. His-238 provides a ligand contact to Fe(3+). Position 238 (His-238) interacts with Zn(2+). Gln-241 lines the 4-imidazolone-5-propanoate pocket. Asp-313 contacts Fe(3+). Asp-313 lines the Zn(2+) pocket. The N-formimidoyl-L-glutamate site is built by Asn-315 and Gly-317. Residue Thr-318 participates in 4-imidazolone-5-propanoate binding.

The protein belongs to the metallo-dependent hydrolases superfamily. HutI family. Requires Zn(2+) as cofactor. The cofactor is Fe(3+).

The protein localises to the cytoplasm. It catalyses the reaction 4-imidazolone-5-propanoate + H2O = N-formimidoyl-L-glutamate. It participates in amino-acid degradation; L-histidine degradation into L-glutamate; N-formimidoyl-L-glutamate from L-histidine: step 3/3. Its function is as follows. Catalyzes the hydrolytic cleavage of the carbon-nitrogen bond in imidazolone-5-propanoate to yield N-formimidoyl-L-glutamate. It is the third step in the universal histidine degradation pathway. The chain is Imidazolonepropionase from Paracoccus denitrificans (strain Pd 1222).